A 361-amino-acid polypeptide reads, in one-letter code: Glucose 1-dehydrogenase (361 aa).

Cys-41 is a binding site for Zn(2+). Thr-43 provides a ligand contact to substrate. Zn(2+) contacts are provided by His-68 and Glu-69. 3 residues coordinate substrate: Glu-119, Glu-156, and Asn-160. Glu-156 contributes to the Zn(2+) binding site. NADP(+)-binding positions include 216-218 (NRH), 275-277 (FGT), 304-306 (SVD), and Lys-349. Substrate is bound at residue Asp-306.

Belongs to the zinc-containing alcohol dehydrogenase family. Glucose 1-dehydrogenase subfamily. As to quaternary structure, homotetramer. Zn(2+) is required as a cofactor.

It carries out the reaction D-glucose + NAD(+) = D-glucono-1,5-lactone + NADH + H(+). It catalyses the reaction D-glucose + NADP(+) = D-glucono-1,5-lactone + NADPH + H(+). The catalysed reaction is D-galactose + NAD(+) = D-galactono-1,4-lactone + NADH + H(+). The enzyme catalyses D-galactose + NADP(+) = D-galactono-1,5-lactone + NADPH + H(+). Its function is as follows. Catalyzes the NAD(P)(+)-dependent oxidation of D-glucose to D-gluconate via gluconolactone. Is also significantly active with galactose as substrate, but not with mannose or glucose 6-phosphate. Can utilize both NAD(+) and NADP(+) as electron acceptor, with a marked preference for NADP(+). Physiologically, may be involved in the degradation of both glucose and galactose through a non-phosphorylative variant of the Entner-Doudoroff pathway. This Thermoplasma acidophilum (strain ATCC 25905 / DSM 1728 / JCM 9062 / NBRC 15155 / AMRC-C165) protein is Glucose 1-dehydrogenase.